Here is an 872-residue protein sequence, read N- to C-terminus: Protein translocase subunit SecA (872 aa).

ATP contacts are provided by residues Q87, G105 to T109, and D500. Residues C855, C857, C866, and H867 each coordinate Zn(2+).

It belongs to the SecA family. Monomer and homodimer. Part of the essential Sec protein translocation apparatus which comprises SecA, SecYEG and auxiliary proteins SecDF-YajC and YidC. The cofactor is Zn(2+).

Its subcellular location is the cell inner membrane. It is found in the cytoplasm. The catalysed reaction is ATP + H2O + cellular proteinSide 1 = ADP + phosphate + cellular proteinSide 2.. Its function is as follows. Part of the Sec protein translocase complex. Interacts with the SecYEG preprotein conducting channel. Has a central role in coupling the hydrolysis of ATP to the transfer of proteins into and across the cell membrane, serving both as a receptor for the preprotein-SecB complex and as an ATP-driven molecular motor driving the stepwise translocation of polypeptide chains across the membrane. The chain is Protein translocase subunit SecA from Anaplasma marginale (strain St. Maries).